Reading from the N-terminus, the 299-residue chain is MATLLSERGAQASWRDYLELTKPKVVLLMLITSLVGMFLATRAGVPWTVLLFGNLGIALCAGGAAAVNHVVDRQIDSVMARTHKRPLAEGRVSPAAALTFAFVLGVSGLALLLTFTNALAAWLTLASLIGYAVIYTGFLKRATPQNIVIGGLAGAAPPLLGWVAVTGQVTAEPLLLVLIIFAWTPPHFWALAIHRKDEYAKVNVPMLPVTHGVHYTKVHILLYTAMLLAVSFMPFAIHMSGPLYLAAAVLLGARFLYWTIALYRDSRPHAAIKTFKFSIWYLFALFIALLVDHYLLLDF.

The next 9 membrane-spanning stretches (helical) occupy residues 25–45 (VVLLMLITSLVGMFLATRAGV), 47–67 (WTVLLFGNLGIALCAGGAAAV), 95–115 (AAALTFAFVLGVSGLALLLTF), 119–139 (LAAWLTLASLIGYAVIYTGFL), 147–167 (IVIGGLAGAAPPLLGWVAVTG), 173–193 (PLLLVLIIFAWTPPHFWALAI), 218–238 (VHILLYTAMLLAVSFMPFAIH), 243–263 (LYLAAAVLLGARFLYWTIALY), and 277–297 (FSIWYLFALFIALLVDHYLLL).

It belongs to the UbiA prenyltransferase family. Protoheme IX farnesyltransferase subfamily.

The protein localises to the cell inner membrane. It catalyses the reaction heme b + (2E,6E)-farnesyl diphosphate + H2O = Fe(II)-heme o + diphosphate. It participates in porphyrin-containing compound metabolism; heme O biosynthesis; heme O from protoheme: step 1/1. Converts heme B (protoheme IX) to heme O by substitution of the vinyl group on carbon 2 of heme B porphyrin ring with a hydroxyethyl farnesyl side group. This chain is Protoheme IX farnesyltransferase, found in Stutzerimonas stutzeri (strain A1501) (Pseudomonas stutzeri).